A 396-amino-acid polypeptide reads, in one-letter code: MSEFIAENRGADAITRPNWSAVFSVAFCVACLIIVEFLPVSLLTPMAQDLGISEGVAGQSVTVTAFVAMFASLFITQTIQATDRRYVVILFAVLLTLSCLLVSFANSFSLLLIGRACLGLALGGFWAMSASLTMRLVPPRTVPKALSVIFGAVSIALVIAAPLGSFLGELIGWRNVFNAAAAMGVLCIFWIIKSLPSLPGEPSHQKQNTFRLLQRPGVMAGMIAIFMSFAGQFAFFTYIRPVYMNLAGFGVDGLTLVLLSFGIASFVGTSLSSFILKRSVKLALAGAPFVLALSALVLTLWGSDKIVATGVAIIWGLTFALIPVGWSTWITRSLADQAEKAGSIQVAVIQLANTCGAAIGGYALDNIGLTSPLMLSGTLMLLTALLVTAKVKMKKS.

Over 1–21 (MSEFIAENRGADAITRPNWSA) the chain is Cytoplasmic. Residues 22-42 (VFSVAFCVACLIIVEFLPVSL) form a helical membrane-spanning segment. The Periplasmic portion of the chain corresponds to 43–54 (LTPMAQDLGISE). The chain crosses the membrane as a helical span at residues 55 to 75 (GVAGQSVTVTAFVAMFASLFI). Residues 76–85 (TQTIQATDRR) lie on the Cytoplasmic side of the membrane. A helical membrane pass occupies residues 86–106 (YVVILFAVLLTLSCLLVSFAN). Position 107 (Ser107) is a topological domain, periplasmic. A helical membrane pass occupies residues 108-128 (FSLLLIGRACLGLALGGFWAM). Residues 129 to 147 (SASLTMRLVPPRTVPKALS) are Cytoplasmic-facing. Residues 148 to 168 (VIFGAVSIALVIAAPLGSFLG) form a helical membrane-spanning segment. Residues 169 to 175 (ELIGWRN) are Periplasmic-facing. The chain crosses the membrane as a helical span at residues 176–196 (VFNAAAAMGVLCIFWIIKSLP). The Cytoplasmic segment spans residues 197–215 (SLPGEPSHQKQNTFRLLQR). Residues 216–236 (PGVMAGMIAIFMSFAGQFAFF) form a helical membrane-spanning segment. Residues 237-255 (TYIRPVYMNLAGFGVDGLT) are Periplasmic-facing. The chain crosses the membrane as a helical span at residues 256 to 276 (LVLLSFGIASFVGTSLSSFIL). Topologically, residues 277–281 (KRSVK) are cytoplasmic. The chain crosses the membrane as a helical span at residues 282–302 (LALAGAPFVLALSALVLTLWG). Residues 303-305 (SDK) are Periplasmic-facing. Residues 306–326 (IVATGVAIIWGLTFALIPVGW) form a helical membrane-spanning segment. Topologically, residues 327–343 (STWITRSLADQAEKAGS) are cytoplasmic. Residues 344–364 (IQVAVIQLANTCGAAIGGYAL) form a helical membrane-spanning segment. The Periplasmic portion of the chain corresponds to 365 to 366 (DN). The helical transmembrane segment at 367–387 (IGLTSPLMLSGTLMLLTALLV) threads the bilayer. Over 388–396 (TAKVKMKKS) the chain is Cytoplasmic.

It belongs to the major facilitator superfamily. DHA1 family. NepI (TC 2.A.1.2.26) subfamily.

It is found in the cell inner membrane. It catalyses the reaction inosine(in) + H(+)(out) = inosine(out) + H(+)(in). The catalysed reaction is guanosine(in) + H(+)(out) = guanosine(out) + H(+)(in). Its function is as follows. Involved in the efflux of purine ribonucleosides, such as inosine and guanosine. The chain is Purine ribonucleoside efflux pump NepI from Escherichia coli O1:K1 / APEC.